Consider the following 489-residue polypeptide: 3-octaprenyl-4-hydroxybenzoate carboxy-lyase (489 aa).

Residue asparagine 172 coordinates Mn(2+). Residues 175–177 (IYR), 189–191 (RWL), and 194–195 (RG) contribute to the prenylated FMN site. Residue glutamate 238 participates in Mn(2+) binding. The active-site Proton donor is the aspartate 287.

It belongs to the UbiD family. Homohexamer. Requires prenylated FMN as cofactor. Mn(2+) serves as cofactor.

It is found in the cell membrane. The enzyme catalyses a 4-hydroxy-3-(all-trans-polyprenyl)benzoate + H(+) = a 2-(all-trans-polyprenyl)phenol + CO2. It participates in cofactor biosynthesis; ubiquinone biosynthesis. In terms of biological role, catalyzes the decarboxylation of 3-octaprenyl-4-hydroxy benzoate to 2-octaprenylphenol, an intermediate step in ubiquinone biosynthesis. In Salmonella arizonae (strain ATCC BAA-731 / CDC346-86 / RSK2980), this protein is 3-octaprenyl-4-hydroxybenzoate carboxy-lyase.